The following is a 101-amino-acid chain: Large ribosomal subunit protein P1 (101 aa).

Residues A65 to T89 form a disordered region. The segment covering E73–D87 has biased composition (basic and acidic residues).

It belongs to the eukaryotic ribosomal protein P1/P2 family. Part of the 50S ribosomal subunit. Homodimer, it forms part of the ribosomal stalk which helps the ribosome interact with GTP-bound translation factors. Forms a heptameric uL10/P0(P1)2(P1)2(P1)2 complex, where uL10/P0 forms an elongated spine to which the P1 dimers bind in a sequential fashion.

Forms part of the ribosomal stalk, playing a central role in the interaction of the ribosome with GTP-bound translation factors. This chain is Large ribosomal subunit protein P1, found in Methanothermococcus thermolithotrophicus (Methanococcus thermolithotrophicus).